A 983-amino-acid chain; its full sequence is UPF0182 protein MLBr00644 (983 aa).

7 consecutive transmembrane segments (helical) span residues 19–39 (LIMV…LVDA), 63–83 (VVVF…GLAV), 113–133 (LIGV…AQSY), 175–195 (FVAV…FGGI), 210–230 (LQLV…YWLD), 259–279 (KLIL…AITL), and 287–307 (IGLV…PLIV).

It belongs to the UPF0182 family.

Its subcellular location is the cell membrane. This chain is UPF0182 protein MLBr00644, found in Mycobacterium leprae (strain Br4923).